A 292-amino-acid chain; its full sequence is Elongation factor Ts (292 aa).

The interval 80-83 (TDFV) is involved in Mg(2+) ion dislocation from EF-Tu.

The protein belongs to the EF-Ts family.

It is found in the cytoplasm. In terms of biological role, associates with the EF-Tu.GDP complex and induces the exchange of GDP to GTP. It remains bound to the aminoacyl-tRNA.EF-Tu.GTP complex up to the GTP hydrolysis stage on the ribosome. In Oenococcus oeni (strain ATCC BAA-331 / PSU-1), this protein is Elongation factor Ts.